We begin with the raw amino-acid sequence, 330 residues long: Transcriptional regulatory protein PHO23 (330 aa).

A disordered region spans residues 139 to 272 (EKIESKSNSK…NSNNSRISRP (134 aa)). Positions 231-254 (TAVSPSTISTATAVNNGRIGTSTA) are enriched in polar residues. A compositionally biased stretch (low complexity) spans 255–269 (SRGVSSVGNSNNSRI). The segment at 280-329 (PLYCYCNQVAYGEMVGCDGADCELEWFHLPCIGLETLPKGKWYCDDCKKK) adopts a PHD-type zinc-finger fold. 8 residues coordinate Zn(2+): Cys-283, Cys-285, Cys-296, Cys-301, His-307, Cys-310, Cys-323, and Cys-326.

This sequence belongs to the ING family. In terms of assembly, interacts with H3K4me3 and to a lesser extent with H3K4me2. Component of the RPD3C(L) complex composed of at least ASH1, CTI6, DEP1, PHO23, RPD3, RXT2, RXT3, SAP30, SDS3, SIN3, UME1 and UME6.

The protein localises to the nucleus. Functionally, component of the RPD3C(L) histone deacetylase complex (HDAC) responsible for the deacetylation of lysine residues on the N-terminal part of the core histones (H2A, H2B, H3 and H4). Histone deacetylation gives a tag for epigenetic repression and plays an important role in transcriptional regulation, cell cycle progression and developmental events. The protein is Transcriptional regulatory protein PHO23 (PHO23) of Saccharomyces cerevisiae (strain ATCC 204508 / S288c) (Baker's yeast).